Reading from the N-terminus, the 326-residue chain is Protein FAM50 homolog (326 aa).

The tract at residues 77-111 (ISNRDLQVARGDQSSSTQSKDSQEAREKEEHVAKH) is disordered. Residues 97-109 (DSQEAREKEEHVA) are compositionally biased toward basic and acidic residues.

It belongs to the FAM50 family.

The chain is Protein FAM50 homolog from Caenorhabditis elegans.